Consider the following 558-residue polypeptide: MAELRSNMIKQGIDRAPHRSLLRAAGVKDEDFGKPFIAVCNSYIDIVPGHVHLQEFGKIVKEAIREAGGVPFEFNTIGVDDGIAMGHIGMRYSLPSREIIADSVETVVSAHWFDGMVCIPNCDKITPGMMMAAMRVNIPTVFVSGGPMEAGRTSDGRKISLSSVFEGVGAYQSGKINEEELNELEQFGCPTCGSCSGMFTANSMNCLAEALGIALPGNGTILATSPERREFAKKSAKQLMELIKKDIKPRDIVTEKAIDNAFALDMALGGSTNTVLHTLAIANEAGVEYSLERINEVAERVPHLSKLAPASDVYIEDLHEAGGVTAALNELSKKEGALHLDTMTVTAKTLGENIAGHEVKDYNVIYPIDKPFTEKGGLAVLFGNLAPDGAIIKTGGVQDGITRHEGPAIVFESQEEALEGIINRKVEAGHVVIIRYEGPKGGPGMPEMLAPTSQIVGMGLGPKVALITDGRFSGASRGLSIGHVSPEAAEGGPLAFVENGDHVVVDIEQRILSVDVPEEEWEKRKANWKGFEPKVKTGYLARYSKLVTSANTGGIMKI.

Position 81 (Asp81) interacts with Mg(2+). Cys122 contributes to the [2Fe-2S] cluster binding site. Asp123 and Lys124 together coordinate Mg(2+). Lys124 is modified (N6-carboxylysine). [2Fe-2S] cluster is bound at residue Cys195. Residue Glu447 coordinates Mg(2+). The active-site Proton acceptor is the Ser473.

The protein belongs to the IlvD/Edd family. As to quaternary structure, homodimer. [2Fe-2S] cluster serves as cofactor. The cofactor is Mg(2+).

It carries out the reaction (2R)-2,3-dihydroxy-3-methylbutanoate = 3-methyl-2-oxobutanoate + H2O. It catalyses the reaction (2R,3R)-2,3-dihydroxy-3-methylpentanoate = (S)-3-methyl-2-oxopentanoate + H2O. Its pathway is amino-acid biosynthesis; L-isoleucine biosynthesis; L-isoleucine from 2-oxobutanoate: step 3/4. It functions in the pathway amino-acid biosynthesis; L-valine biosynthesis; L-valine from pyruvate: step 3/4. In terms of biological role, functions in the biosynthesis of branched-chain amino acids. Catalyzes the dehydration of (2R,3R)-2,3-dihydroxy-3-methylpentanoate (2,3-dihydroxy-3-methylvalerate) into 2-oxo-3-methylpentanoate (2-oxo-3-methylvalerate) and of (2R)-2,3-dihydroxy-3-methylbutanoate (2,3-dihydroxyisovalerate) into 2-oxo-3-methylbutanoate (2-oxoisovalerate), the penultimate precursor to L-isoleucine and L-valine, respectively. This is Dihydroxy-acid dehydratase from Bacillus pumilus (strain SAFR-032).